Reading from the N-terminus, the 507-residue chain is Zinc finger CCCH-type with G patch domain-containing protein (507 aa).

Met-1 is modified (N-acetylmethionine). The segment at 88 to 125 is disordered; sequence PVDPGNDSKTVPGSEVQPTPTSSALEEEEEDPDLEDLS. A compositionally biased stretch (polar residues) spans 94 to 111; sequence DSKTVPGSEVQPTPTSSA. Positions 112–123 are enriched in acidic residues; sequence LEEEEEDPDLED. The segment at 170–196 adopts a C3H1-type zinc-finger fold; it reads KSLKPCPFFLEGKCRFKENCRFSHGQL. The disordered stretch occupies residues 264-283; it reads LRTEATDSSDSDTGDASDSS. Residue Ser-272 is modified to Phosphoserine. Thr-276 is modified (phosphothreonine). Residues 309–355 enclose the G-patch domain; the sequence is TRGIGSKLLVKMGYEFGKGLGRHAEGRVEPIHAVVLPRGKSLDQCAE. Ser-349 bears the Phosphoserine mark. Disordered stretches follow at residues 359–389 and 486–507; these read KKTK…PPRN and AQEA…MTEF. The span at 487-507 shows a compositional bias: basic and acidic residues; that stretch reads QEADLQRKQRKADTHRKMTEF.

Interacts with CHD4/Mi-2; the interaction is direct.

The protein resides in the nucleus. Its function is as follows. Transcription repressor that specifically binds the 5'-GGAG[GA]A[GA]A-3' consensus sequence. Represses transcription by recruiting the chromatin multiprotein complex NuRD to target promoters. Negatively regulates expression of EGFR, a gene involved in cell proliferation, survival and migration. Its ability to repress genes of the EGFR pathway suggest it may act as a tumor suppressor. This chain is Zinc finger CCCH-type with G patch domain-containing protein (Zgpat), found in Rattus norvegicus (Rat).